The sequence spans 515 residues: mRNA export factor ICP27 homolog (515 aa).

The Zn(2+) site is built by Cys-230, His-335, Cys-337, and Cys-342. Residues 230 to 342 (CVFNDNGHGD…SNHKCDDVSC (113 aa)) form a CHC2-type zinc finger. Residues 398 to 408 (YSTNHDLPQTS) are compositionally biased toward polar residues. The tract at residues 398–422 (YSTNHDLPQTSHRSHKNHGTPKVKS) is disordered. The segment covering 409-422 (HRSHKNHGTPKVKS) has biased composition (basic residues).

The protein belongs to the HHV-1 ICP27 protein family.

Its subcellular location is the virion tegument. The protein localises to the virion. It is found in the host nucleus. The protein resides in the host cytoplasm. Its function is as follows. Immediate early (EI) protein that plays many roles during productive infection including regulation of viral gene expression and nuclear export of intronless viral RNAs. The protein is mRNA export factor ICP27 homolog of Human herpesvirus 6A (strain Uganda-1102) (HHV-6 variant A).